Here is a 383-residue protein sequence, read N- to C-terminus: MNTQLPSFIALYRALIATPSISANDGALDQSNERLITLLAGWLSDLGLRVEMQPVPNTRNKFNLLANYGEGAGGLMLAGHTDTVPFDEGRWTRDPFTLSEQDNRLYGLGTADMKGLFAFIIDTLRDIELHKLNKPLYILATADEETSMAGARYFAASTALRPDCCIIGEPTSLKPIRAHKGHLSEAIRITGQSGHSSDPARGVNAIEIMHNAIGHLLTLRNTLQQRYHNPAFNIPYPTMNLGHIHGGDAANRICACCELHLDMRPLPGMTLNDLNELLNQALTPIAAQWSGRLRIEHLHPPIPGYECPRHAPLVQAIEQLLGERAEAVNYCTEAPFLQEVCPTLVLGPGSIEQAHQPDEYLSTDFIVPTRTLLTQLIHHFCQR.

Position 80 (H80) interacts with Zn(2+). Residue D82 is part of the active site. D112 contacts Zn(2+). The active site involves E144. 3 residues coordinate Zn(2+): E145, E169, and H355.

This sequence belongs to the peptidase M20A family. ArgE subfamily. In terms of assembly, homodimer. Zn(2+) serves as cofactor. Requires Co(2+) as cofactor. Glutathione is required as a cofactor.

The protein localises to the cytoplasm. It catalyses the reaction N(2)-acetyl-L-ornithine + H2O = L-ornithine + acetate. The protein operates within amino-acid biosynthesis; L-arginine biosynthesis; L-ornithine from N(2)-acetyl-L-ornithine (linear): step 1/1. In terms of biological role, catalyzes the hydrolysis of the amide bond of N(2)-acetylated L-amino acids. Cleaves the acetyl group from N-acetyl-L-ornithine to form L-ornithine, an intermediate in L-arginine biosynthesis pathway, and a branchpoint in the synthesis of polyamines. The protein is Acetylornithine deacetylase of Edwardsiella ictaluri (strain 93-146).